The sequence spans 212 residues: Probable 2-dehydro-3-deoxy-6-phosphogalactonate aldolase (212 aa).

Arginine 18 contacts 2-dehydro-3-deoxy-6-phospho-D-galactonate. Glutamate 41 (proton donor/acceptor) is an active-site residue. Residues threonine 70, lysine 130, glycine 160, glycine 180, and serine 181 each contribute to the 2-dehydro-3-deoxy-6-phospho-D-galactonate site. The active-site Schiff-base intermediate with substrate is the lysine 130.

This sequence belongs to the KHG/KDPG aldolase family. As to quaternary structure, homotrimer.

The enzyme catalyses 2-dehydro-3-deoxy-6-phospho-D-galactonate = D-glyceraldehyde 3-phosphate + pyruvate. The protein operates within carbohydrate acid metabolism; D-galactonate degradation; D-glyceraldehyde 3-phosphate and pyruvate from D-galactonate: step 3/3. Its function is as follows. Involved in the degradation of galactose via the DeLey-Doudoroff pathway. Catalyzes the reversible, stereospecific retro-aldol cleavage of 2-keto-3-deoxy-6-phosphogalactonate (KDPGal) to pyruvate and D-glyceraldehyde-3-phosphate. This Rhizobium meliloti (strain 1021) (Ensifer meliloti) protein is Probable 2-dehydro-3-deoxy-6-phosphogalactonate aldolase (dgoA).